A 528-amino-acid polypeptide reads, in one-letter code: Putative pumilio homolog 10 (528 aa).

Residues 188 to 528 (EGSGASYPDE…KIFSKTILKK (341 aa)) form the PUM-HD domain. 8 Pumilio repeats span residues 213–248 (EIYGSVNLMARDQIGCRALQKLVEEGTVLDSKVIFL), 249–284 (EIIDHVVELSMDPLGNYIVQKLLVVSDEEQRTMIVS), 285–323 (VLTSKPRELIKICLNTNGTRVIQKMIKTVKTKQQIALVK), 325–360 (ALEPGFLVLVNDSNGYHVLQSCLEFLVPNDNKFVVE), 361–396 (AATEYCAQLATHQYGCYVLQCSLINTVGLQHERLVA), 397–433 (EISRDSLRLSQDPFGNYVVQCLIDQQVSSVNLLLPFR), 434–465 (THCIELATQKFSSHVIEKCLRKYPESRAEIVR), and 466–503 (ELLSYPNFEQLLQDPYANYVIQTALSVTKGAVRARLVE).

The protein resides in the cytoplasm. Sequence-specific RNA-binding protein that regulates translation and mRNA stability by binding the 3'-UTR of target mRNAs. This is Putative pumilio homolog 10 (APUM10) from Arabidopsis thaliana (Mouse-ear cress).